Reading from the N-terminus, the 463-residue chain is UDP-N-acetylmuramoylalanine--D-glutamate ligase (463 aa).

ATP is bound at residue 121-127; sequence GTNGKST.

It belongs to the MurCDEF family.

The protein localises to the cytoplasm. It carries out the reaction UDP-N-acetyl-alpha-D-muramoyl-L-alanine + D-glutamate + ATP = UDP-N-acetyl-alpha-D-muramoyl-L-alanyl-D-glutamate + ADP + phosphate + H(+). It functions in the pathway cell wall biogenesis; peptidoglycan biosynthesis. Functionally, cell wall formation. Catalyzes the addition of glutamate to the nucleotide precursor UDP-N-acetylmuramoyl-L-alanine (UMA). This chain is UDP-N-acetylmuramoylalanine--D-glutamate ligase (murD), found in Rhizobium meliloti (strain 1021) (Ensifer meliloti).